A 194-amino-acid polypeptide reads, in one-letter code: MHILTAGVDEAGRGPLVGSVFAAAVILPETFDLPGLTDSKKLSEKKRDALAEMIKNQAVAWHVAAAGPEEIASLNILHATMLAMKRAVDGLAVRPEKIFIDGNRIPEHLNIPAEAVVKGDSKIIEISAASVLAKTARDAEMYALAQRHPQYGFDKHKGYGTKQHLEALEKYGVLPEHRRDFAPVRNLLAQQALF.

An RNase H type-2 domain is found at 3-193 (ILTAGVDEAG…VRNLLAQQAL (191 aa)). Residues D9, E10, and D101 each coordinate a divalent metal cation.

The protein belongs to the RNase HII family. Mn(2+) is required as a cofactor. The cofactor is Mg(2+).

The protein resides in the cytoplasm. The catalysed reaction is Endonucleolytic cleavage to 5'-phosphomonoester.. In terms of biological role, endonuclease that specifically degrades the RNA of RNA-DNA hybrids. This is Ribonuclease HII (rnhB) from Neisseria meningitidis serogroup A / serotype 4A (strain DSM 15465 / Z2491).